Reading from the N-terminus, the 135-residue chain is MNILRLLLATLLVCLCLLTAYSHLAPEEKPRDDRNLRSNSSMNMLDLSSVSIVALNKKSKKISRKEAEKKRSSKKKASMKNVAQPRRPRPPPPAPCVATRDSCKPPAPACCDPCASCQCRFFRSSCSCRVLNPTC.

Positions 1–22 are cleaved as a signal peptide; sequence MNILRLLLATLLVCLCLLTAYS. The N-linked (GlcNAc...) asparagine glycan is linked to Asn39. The segment at 56-101 is disordered; sequence NKKSKKISRKEAEKKRSSKKKASMKNVAQPRRPRPPPPAPCVATRD. 5 disulfide bridges follow: Cys96/Cys111, Cys103/Cys117, Cys110/Cys128, Cys114/Cys135, and Cys119/Cys126. The 40-residue stretch at 96–135 folds into the Agouti domain; the sequence is CVATRDSCKPPAPACCDPCASCQCRFFRSSCSCRVLNPTC.

Its subcellular location is the secreted. In terms of biological role, involved in the regulation of melanogenesis. The binding of ASP to MC1R precludes alpha-MSH initiated signaling and thus blocks production of cAMP, leading to a down-regulation of eumelanogenesis (brown/black pigment) and thus increasing synthesis of pheomelanin (yellow/red pigment). The polypeptide is Agouti-signaling protein (ASIP) (Felis catus (Cat)).